The following is an 89-amino-acid chain: MKLYIAAALLTLGLAAPITETESHSIASRGSFSCPGGLINSSPMCCSVNVLGLLALDCRNVGPDGCVGSSKPNCCTLGTAGQGLICNEM.

The signal sequence occupies residues 1–15 (MKLYIAAALLTLGLA). Intrachain disulfides connect Cys-34–Cys-74, Cys-45–Cys-66, Cys-46–Cys-58, and Cys-75–Cys-86.

This sequence belongs to the cerato-ulmin hydrophobin family. In terms of assembly, homodimer. Homodimers further self-assemble to form highly ordered films at water-air interfaces through intermolecular interactions.

The protein resides in the secreted. It localises to the cell wall. Functionally, aerial growth, conidiation, and dispersal of filamentous fungi in the environment rely upon a capability of their secreting small amphipathic proteins called hydrophobins (HPBs) with low sequence identity. Class I can self-assemble into an outermost layer of rodlet bundles on aerial cell surfaces, conferring cellular hydrophobicity that supports fungal growth, development and dispersal; whereas Class II form highly ordered films at water-air interfaces through intermolecular interactions but contribute nothing to the rodlet structure. This is Class II hydrophobin 2 from Trichoderma asperellum (strain ATCC 204424 / CBS 433.97 / NBRC 101777).